Consider the following 160-residue polypeptide: 3-hydroxyacyl-[acyl-carrier-protein] dehydratase FabZ (160 aa).

The active site involves H63.

The protein belongs to the thioester dehydratase family. FabZ subfamily.

The protein resides in the cytoplasm. The catalysed reaction is a (3R)-hydroxyacyl-[ACP] = a (2E)-enoyl-[ACP] + H2O. In terms of biological role, involved in unsaturated fatty acids biosynthesis. Catalyzes the dehydration of short chain beta-hydroxyacyl-ACPs and long chain saturated and unsaturated beta-hydroxyacyl-ACPs. The polypeptide is 3-hydroxyacyl-[acyl-carrier-protein] dehydratase FabZ (Xylella fastidiosa (strain 9a5c)).